Here is a 295-residue protein sequence, read N- to C-terminus: MFRGVFPAIITPFKDDGSLDEDGLRRNVEVLSKTGISGVVPCGTTGESATLSHEEHKKVVEIVVDCSDVPVVAGTGSNNTSEAIELTRHAADAGADAALLITPYYNRPNERGLFEHFRKVAESSDIPIVLYNVPKRTGVELRPDVVARLSEISNIVAIKEASGSLTQVSRIIELTADKNFAVLSGDDDLTLPMLALGATGVVSVVANVAPRATVEMVNAFLDGNITRAQELHYRLAPLVRAMFLETNPIPVKTAYRMLGMAAGPLRLPLAPMSDENEAKLRDVLTKMSDLTGDMR.

Thr45 provides a ligand contact to pyruvate. Residue Tyr131 is the Proton donor/acceptor of the active site. Lys159 serves as the catalytic Schiff-base intermediate with substrate. Val202 contributes to the pyruvate binding site.

It belongs to the DapA family. In terms of assembly, homotetramer; dimer of dimers.

It localises to the cytoplasm. The catalysed reaction is L-aspartate 4-semialdehyde + pyruvate = (2S,4S)-4-hydroxy-2,3,4,5-tetrahydrodipicolinate + H2O + H(+). It functions in the pathway amino-acid biosynthesis; L-lysine biosynthesis via DAP pathway; (S)-tetrahydrodipicolinate from L-aspartate: step 3/4. In terms of biological role, catalyzes the condensation of (S)-aspartate-beta-semialdehyde [(S)-ASA] and pyruvate to 4-hydroxy-tetrahydrodipicolinate (HTPA). This chain is 4-hydroxy-tetrahydrodipicolinate synthase, found in Methanothrix thermoacetophila (strain DSM 6194 / JCM 14653 / NBRC 101360 / PT) (Methanosaeta thermophila).